A 101-amino-acid chain; its full sequence is Urease subunit beta (101 aa).

The protein belongs to the urease beta subunit family. In terms of assembly, heterotrimer of UreA (gamma), UreB (beta) and UreC (alpha) subunits. Three heterotrimers associate to form the active enzyme.

Its subcellular location is the cytoplasm. The catalysed reaction is urea + 2 H2O + H(+) = hydrogencarbonate + 2 NH4(+). Its pathway is nitrogen metabolism; urea degradation; CO(2) and NH(3) from urea (urease route): step 1/1. The sequence is that of Urease subunit beta from Hahella chejuensis (strain KCTC 2396).